Reading from the N-terminus, the 84-residue chain is Hepcidin (84 aa).

An N-terminal signal peptide occupies residues 1-24; the sequence is MALSSQIWAACLLLLLLLASLTSG. Residues 25–54 constitute a propeptide that is removed on maturation; that stretch reads SVFPQQTGQLAELQPQDRAGARAGWTPMLQ. 3 disulfide bridges follow: Cys-69-Cys-72, Cys-70-Cys-78, and Cys-73-Cys-81.

Belongs to the hepcidin family. In terms of assembly, interacts with SLC40A1; this interaction promotes SLC40A1 rapid ubiquitination.

Its subcellular location is the secreted. Liver-produced hormone that constitutes the main circulating regulator of iron absorption and distribution across tissues. Acts by promoting endocytosis and degradation of ferroportin/SLC40A1, leading to the retention of iron in iron-exporting cells and decreased flow of iron into plasma. Controls the major flows of iron into plasma: absorption of dietary iron in the intestine, recycling of iron by macrophages, which phagocytose old erythrocytes and other cells, and mobilization of stored iron from hepatocytes. Functionally, has strong antimicrobial activity against E.coli ML35P N.cinerea and weaker against S.epidermidis, S.aureus and group b streptococcus bacteria. Active against the fungus C.albicans. No activity against P.aeruginosa. The sequence is that of Hepcidin (HAMP) from Pongo abelii (Sumatran orangutan).